The following is a 77-amino-acid chain: Coiled-coil-helix-coiled-coil-helix domain-containing protein C550.01c (77 aa).

The CHCH domain occupies 24–65 (KGGCVEEHLRLNDCYWDTHDWRKCTEQMEEFRKCWEKRHGPL). 2 consecutive short sequence motifs (cx9C motif) follow at residues 27–37 (CVEEHLRLNDC) and 47–57 (CTEQMEEFRKC). Cystine bridges form between Cys27/Cys57 and Cys37/Cys47.

Its subcellular location is the cytoplasm. The protein resides in the nucleus. This chain is Coiled-coil-helix-coiled-coil-helix domain-containing protein C550.01c, found in Schizosaccharomyces pombe (strain 972 / ATCC 24843) (Fission yeast).